The following is a 203-amino-acid chain: LexA repressor (203 aa).

The H-T-H motif DNA-binding region spans 30 to 50; sequence VREICQAVSLKSTSTVHGHLK. Active-site for autocatalytic cleavage activity residues include Ser127 and Lys164.

Belongs to the peptidase S24 family. In terms of assembly, homodimer.

It carries out the reaction Hydrolysis of Ala-|-Gly bond in repressor LexA.. Its function is as follows. Represses a number of genes involved in the response to DNA damage (SOS response), including recA and lexA. In the presence of single-stranded DNA, RecA interacts with LexA causing an autocatalytic cleavage which disrupts the DNA-binding part of LexA, leading to derepression of the SOS regulon and eventually DNA repair. The protein is LexA repressor of Clostridium perfringens (strain ATCC 13124 / DSM 756 / JCM 1290 / NCIMB 6125 / NCTC 8237 / Type A).